The sequence spans 503 residues: Cytochrome c lysine N-methyltransferase 1 (503 aa).

The region spanning 52 to 276 is the SET domain; it reads SKFELLRIPR…EEAQVFISYA (225 aa). Residues 190 to 291 are SET-like; sequence NYEKLISTVY…VHFEQIYGFL (102 aa).

The protein belongs to the class V-like SAM-binding methyltransferase superfamily.

The protein localises to the cytoplasm. Its subcellular location is the cytosol. The enzyme catalyses L-lysyl-[cytochrome c] + S-adenosyl-L-methionine = N(6)-methyl-L-lysyl-[cytochrome c] + S-adenosyl-L-homocysteine + H(+). Its function is as follows. Methyltransferase which mediates trimethylation of cytochrome c (CYC1). In Kluyveromyces lactis (strain ATCC 8585 / CBS 2359 / DSM 70799 / NBRC 1267 / NRRL Y-1140 / WM37) (Yeast), this protein is Cytochrome c lysine N-methyltransferase 1 (CTM1).